Consider the following 364-residue polypeptide: Fructose-bisphosphate aldolase A (364 aa).

Phosphotyrosine is present on Y5. The residue at position 9 (T9) is a Phosphothreonine. Phosphoserine occurs at positions 36 and 39. Residue K42 is modified to N6-acetyllysine; alternate. A Glycyl lysine isopeptide (Lys-Gly) (interchain with G-Cter in SUMO1); alternate cross-link involves residue K42. K42 is covalently cross-linked (Glycyl lysine isopeptide (Lys-Gly) (interchain with G-Cter in SUMO2); alternate). Position 43 (R43) interacts with beta-D-fructose 1,6-bisphosphate. A Phosphoserine modification is found at S46. Position 99 is an N6-(2-hydroxyisobutyryl)lysine (K99). K108 carries the post-translational modification N6-acetyllysine. N6-acetyllysine; alternate is present on K111. K111 carries the N6-malonyllysine; alternate modification. S132 is subject to Phosphoserine. K147 carries the post-translational modification N6-(2-hydroxyisobutyryl)lysine. E188 functions as the Proton acceptor in the catalytic mechanism. The Schiff-base intermediate with dihydroxyacetone-P role is filled by K230. S272 bears the Phosphoserine mark. Beta-D-fructose 1,6-bisphosphate-binding positions include 272-274 (SGG), S301, and R304. K312 is subject to N6-malonyllysine. K330 carries the N6-acetyllysine modification.

Belongs to the class I fructose-bisphosphate aldolase family. In terms of assembly, homotetramer. Interacts with SNX9 and WAS. Interacts with FBP2; the interaction blocks FBP2 inhibition by physiological concentrations of AMP and reduces inhibition by Ca(2+).

It localises to the cytoplasm. The protein localises to the myofibril. Its subcellular location is the sarcomere. The protein resides in the i band. It is found in the m line. The enzyme catalyses beta-D-fructose 1,6-bisphosphate = D-glyceraldehyde 3-phosphate + dihydroxyacetone phosphate. It functions in the pathway carbohydrate degradation; glycolysis; D-glyceraldehyde 3-phosphate and glycerone phosphate from D-glucose: step 4/4. Functionally, catalyzes the reversible conversion of beta-D-fructose 1,6-bisphosphate (FBP) into two triose phosphate and plays a key role in glycolysis and gluconeogenesis. In addition, may also function as scaffolding protein. The chain is Fructose-bisphosphate aldolase A (ALDOA) from Pongo abelii (Sumatran orangutan).